Consider the following 610-residue polypeptide: UvrABC system protein C (610 aa).

A GIY-YIG domain is found at 16–94 (SAPGVYRMYD…IKQYMPKYNV (79 aa)). The UVR domain maps to 203 to 238 (KQVISQLVAKMETAAIDMEYERAAQYRDQITALRRV).

This sequence belongs to the UvrC family. Interacts with UvrB in an incision complex.

It is found in the cytoplasm. Functionally, the UvrABC repair system catalyzes the recognition and processing of DNA lesions. UvrC both incises the 5' and 3' sides of the lesion. The N-terminal half is responsible for the 3' incision and the C-terminal half is responsible for the 5' incision. This is UvrABC system protein C from Shewanella frigidimarina (strain NCIMB 400).